Reading from the N-terminus, the 404-residue chain is Cysteine desulfurase IscS (404 aa).

Pyridoxal 5'-phosphate-binding positions include 75 to 76 (AT), N155, Q183, and 203 to 205 (SGH). K206 bears the N6-(pyridoxal phosphate)lysine mark. T243 serves as a coordination point for pyridoxal 5'-phosphate. Residue C328 is the Cysteine persulfide intermediate of the active site. C328 contributes to the [2Fe-2S] cluster binding site.

The protein belongs to the class-V pyridoxal-phosphate-dependent aminotransferase family. NifS/IscS subfamily. In terms of assembly, homodimer. Forms a heterotetramer with IscU, interacts with other sulfur acceptors. Pyridoxal 5'-phosphate serves as cofactor.

The protein resides in the cytoplasm. The catalysed reaction is (sulfur carrier)-H + L-cysteine = (sulfur carrier)-SH + L-alanine. It participates in cofactor biosynthesis; iron-sulfur cluster biosynthesis. Functionally, master enzyme that delivers sulfur to a number of partners involved in Fe-S cluster assembly, tRNA modification or cofactor biosynthesis. Catalyzes the removal of elemental sulfur and selenium atoms from cysteine and selenocysteine to produce alanine. Functions as a sulfur delivery protein for Fe-S cluster synthesis onto IscU, an Fe-S scaffold assembly protein, as well as other S acceptor proteins. Also functions as a selenium delivery protein in the pathway for the biosynthesis of selenophosphate. This chain is Cysteine desulfurase IscS, found in Salmonella arizonae (strain ATCC BAA-731 / CDC346-86 / RSK2980).